The primary structure comprises 235 residues: Phosphoribosylformylglycinamidine synthase subunit PurQ (235 aa).

The region spanning Gly-4–Arg-234 is the Glutamine amidotransferase type-1 domain. The Nucleophile role is filled by Cys-86. Active-site residues include His-203 and Glu-205.

Part of the FGAM synthase complex composed of 1 PurL, 1 PurQ and 2 PurS subunits.

The protein resides in the cytoplasm. The catalysed reaction is N(2)-formyl-N(1)-(5-phospho-beta-D-ribosyl)glycinamide + L-glutamine + ATP + H2O = 2-formamido-N(1)-(5-O-phospho-beta-D-ribosyl)acetamidine + L-glutamate + ADP + phosphate + H(+). It carries out the reaction L-glutamine + H2O = L-glutamate + NH4(+). It participates in purine metabolism; IMP biosynthesis via de novo pathway; 5-amino-1-(5-phospho-D-ribosyl)imidazole from N(2)-formyl-N(1)-(5-phospho-D-ribosyl)glycinamide: step 1/2. In terms of biological role, part of the phosphoribosylformylglycinamidine synthase complex involved in the purines biosynthetic pathway. Catalyzes the ATP-dependent conversion of formylglycinamide ribonucleotide (FGAR) and glutamine to yield formylglycinamidine ribonucleotide (FGAM) and glutamate. The FGAM synthase complex is composed of three subunits. PurQ produces an ammonia molecule by converting glutamine to glutamate. PurL transfers the ammonia molecule to FGAR to form FGAM in an ATP-dependent manner. PurS interacts with PurQ and PurL and is thought to assist in the transfer of the ammonia molecule from PurQ to PurL. The sequence is that of Phosphoribosylformylglycinamidine synthase subunit PurQ from Symbiobacterium thermophilum (strain DSM 24528 / JCM 14929 / IAM 14863 / T).